Reading from the N-terminus, the 213-residue chain is E3 ubiquitin-protein ligase NleG8 (213 aa).

The interval 136 to 189 (CPITLCVPETGVFVKNARCSKVCSLYDISALTEMLRRNASHPLSREAFTPGMIV) is RING/U-box domain. The short motif at 211–213 (TRL) is the PDZ-binding motif element.

The protein belongs to the NleG E3 ligase family. Interacts with host GOPC (human protein).

The protein localises to the secreted. The protein resides in the host cytoplasm. It carries out the reaction S-ubiquitinyl-[E2 ubiquitin-conjugating enzyme]-L-cysteine + [acceptor protein]-L-lysine = [E2 ubiquitin-conjugating enzyme]-L-cysteine + N(6)-ubiquitinyl-[acceptor protein]-L-lysine.. Effector proteins function to alter host cell physiology and promote bacterial survival in host tissues. This protein is an E3 ubiquitin-protein ligase that probably interferes with the host's ubiquitination pathway and targets host proteins for proteasomal degradation. Mice infected with a strain of bacteria deleted for this gene had an increased survival rate. Can be ubiquitinylated, and ubiquitinate ubiquitin, giving rise to polyubiquitin chains (in vitro). This is E3 ubiquitin-protein ligase NleG8 from Citrobacter rodentium.